Consider the following 477-residue polypeptide: Methionine aminopeptidase 2 (477 aa).

Residues 1 to 121 (MAGVEEAASC…TDPPSVPICD (121 aa)) form a disordered region. Ala2 carries the post-translational modification N-acetylalanine. Over residues 36–46 (KKKKRKKKKSK) the composition is skewed to basic residues. Ser45 carries the post-translational modification Phosphoserine. The segment covering 54–78 (EPDKEAGASVDEVTRQLERQALEEK) has biased composition (basic and acidic residues). Ser62 carries the phosphoserine; alternate modification. Ser62 carries O-linked (GlcNAc) serine; alternate glycosylation. Residues 79-91 (EKDDDDEDGDGDG) are compositionally biased toward acidic residues. The span at 96 to 108 (GKKKKKKKKKRGP) shows a compositional bias: basic residues. His230 lines the substrate pocket. A divalent metal cation is bound by residues Asp250, Asp261, and His330. His338 contacts substrate. A divalent metal cation-binding residues include Glu363 and Glu458.

The protein belongs to the peptidase M24A family. Methionine aminopeptidase eukaryotic type 2 subfamily. In terms of assembly, binds EIF2S1 at low magnesium concentrations. Interacts strongly with the eIF-2 gamma-subunit EIF2S3. Co(2+) serves as cofactor. The cofactor is Zn(2+). It depends on Mn(2+) as a cofactor. Fe(2+) is required as a cofactor. In terms of processing, contains approximately 12 O-linked N-acetylglucosamine (GlcNAc) residues. O-glycosylation is required for EIF2S1 binding.

It localises to the cytoplasm. The enzyme catalyses Release of N-terminal amino acids, preferentially methionine, from peptides and arylamides.. Cotranslationally removes the N-terminal methionine from nascent proteins. The N-terminal methionine is often cleaved when the second residue in the primary sequence is small and uncharged (Met-Ala-, Cys, Gly, Pro, Ser, Thr, or Val). Functionally, protects eukaryotic initiation factor EIF2S1 from translation-inhibiting phosphorylation by inhibitory kinases such as EIF2AK2/PKR and EIF2AK1/HCR. Plays a critical role in the regulation of protein synthesis. This is Methionine aminopeptidase 2 from Bos taurus (Bovine).